Reading from the N-terminus, the 524-residue chain is Cytochrome P450 1A1 (524 aa).

Positions 33–44 are mitochondrial targeting signal; that stretch reads TRTWVPKGLKSP. The O-linked (GlcNAc) serine glycan is linked to S71. F228 serves as a coordination point for substrate. C461 lines the heme pocket.

This sequence belongs to the cytochrome P450 family. As to quaternary structure, both Cytochrome P450MT2A and Cytochrome P450MT2B interact with cytosolic chaperones HSP70 and HSP90; this interaction is required for initial targeting to mitochondria. P450MT2B interacts (via mitochondrial targeting signal) with TOMM40 (via N-terminus); this interaction is required for translocation across the mitochondrial outer membrane. Heme is required as a cofactor. In terms of processing, two forms; MT2A (long form) and MT2B (short form); are produced by NH2-terminal proteolytic cleavage. This cleavage activates a cryptic mitochondrial targeting signal. As to expression, liver.

It is found in the cytoplasm. The protein localises to the endoplasmic reticulum membrane. Its subcellular location is the mitochondrion inner membrane. It localises to the microsome membrane. The enzyme catalyses an organic molecule + reduced [NADPH--hemoprotein reductase] + O2 = an alcohol + oxidized [NADPH--hemoprotein reductase] + H2O + H(+). It carries out the reaction estrone + reduced [NADPH--hemoprotein reductase] + O2 = 2-hydroxyestrone + oxidized [NADPH--hemoprotein reductase] + H2O + H(+). The catalysed reaction is estrone + reduced [NADPH--hemoprotein reductase] + O2 = 4-hydroxyestrone + oxidized [NADPH--hemoprotein reductase] + H2O + H(+). It catalyses the reaction estrone + reduced [NADPH--hemoprotein reductase] + O2 = 6alpha-hydroxyestrone + oxidized [NADPH--hemoprotein reductase] + H2O + H(+). The enzyme catalyses estrone + reduced [NADPH--hemoprotein reductase] + O2 = 15alpha-hydroxyestrone + oxidized [NADPH--hemoprotein reductase] + H2O + H(+). It carries out the reaction estrone + reduced [NADPH--hemoprotein reductase] + O2 = 16alpha-hydroxyestrone + oxidized [NADPH--hemoprotein reductase] + H2O + H(+). The catalysed reaction is 17beta-estradiol + reduced [NADPH--hemoprotein reductase] + O2 = 2-hydroxy-17beta-estradiol + oxidized [NADPH--hemoprotein reductase] + H2O + H(+). It catalyses the reaction 17beta-estradiol + reduced [NADPH--hemoprotein reductase] + O2 = 4-hydroxy-17beta-estradiol + oxidized [NADPH--hemoprotein reductase] + H2O + H(+). The enzyme catalyses 17beta-estradiol + reduced [NADPH--hemoprotein reductase] + O2 = 6alpha-hydroxy-17beta-estradiol + oxidized [NADPH--hemoprotein reductase] + H2O + H(+). It carries out the reaction 17beta-estradiol + reduced [NADPH--hemoprotein reductase] + O2 = 7alpha-hydroxy-17beta-estradiol + oxidized [NADPH--hemoprotein reductase] + H2O + H(+). The catalysed reaction is 17beta-estradiol + reduced [NADPH--hemoprotein reductase] + O2 = 15alpha-hydroxy-17beta-estradiol + oxidized [NADPH--hemoprotein reductase] + H2O + H(+). It catalyses the reaction (5Z,8Z,11Z)-eicosatrienoate + reduced [NADPH--hemoprotein reductase] + O2 = 19-hydroxy-(5Z,8Z,11Z)-eicosatrienoate + oxidized [NADPH--hemoprotein reductase] + H2O + H(+). The enzyme catalyses (5Z,8Z,11Z,14Z)-eicosatetraenoate + reduced [NADPH--hemoprotein reductase] + O2 = 16-hydroxy-(5Z,8Z,11Z,14Z)-eicosatetraenoate + oxidized [NADPH--hemoprotein reductase] + H2O + H(+). It carries out the reaction (5Z,8Z,11Z,14Z)-eicosatetraenoate + reduced [NADPH--hemoprotein reductase] + O2 = 17-hydroxy-(5Z,8Z,11Z,14Z)-eicosatetraenoate + oxidized [NADPH--hemoprotein reductase] + H2O + H(+). The catalysed reaction is (5Z,8Z,11Z,14Z)-eicosatetraenoate + reduced [NADPH--hemoprotein reductase] + O2 = 18-hydroxy-(5Z,8Z,11Z,14Z)-eicosatetraenoate + oxidized [NADPH--hemoprotein reductase] + H2O + H(+). It catalyses the reaction (5Z,8Z,11Z,14Z)-eicosatetraenoate + reduced [NADPH--hemoprotein reductase] + O2 = 19-hydroxy-(5Z,8Z,11Z,14Z)-eicosatetraenoate + oxidized [NADPH--hemoprotein reductase] + H2O + H(+). The enzyme catalyses (5Z,8Z,11Z,14Z,17Z)-eicosapentaenoate + reduced [NADPH--hemoprotein reductase] + O2 = 19-hydroxy-(5Z,8Z,11Z,14Z,17Z)-eicosapentaenoate + oxidized [NADPH--hemoprotein reductase] + H2O + H(+). It carries out the reaction (5Z,8Z,11Z,14Z)-eicosatetraenoate + reduced [NADPH--hemoprotein reductase] + O2 = (8R,9S)-epoxy-(5Z,11Z,14Z)-eicosatrienoate + oxidized [NADPH--hemoprotein reductase] + H2O + H(+). The catalysed reaction is (5Z,8Z,11Z,14Z)-eicosatetraenoate + reduced [NADPH--hemoprotein reductase] + O2 = (11R,12S)-epoxy-(5Z,8Z,14Z)-eicosatrienoate + oxidized [NADPH--hemoprotein reductase] + H2O + H(+). It catalyses the reaction (5Z,8Z,11Z,14Z)-eicosatetraenoate + reduced [NADPH--hemoprotein reductase] + O2 = (11S,12R)-epoxy-(5Z,8Z,14Z)-eicosatrienoate + oxidized [NADPH--hemoprotein reductase] + H2O + H(+). The enzyme catalyses (5Z,8Z,11Z,14Z)-eicosatetraenoate + reduced [NADPH--hemoprotein reductase] + O2 = (14R,15S)-epoxy-(5Z,8Z,11Z)-eicosatrienoate + oxidized [NADPH--hemoprotein reductase] + H2O + H(+). It carries out the reaction (5Z,8Z,11Z,14Z,17Z)-eicosapentaenoate + reduced [NADPH--hemoprotein reductase] + O2 = (17R,18S)-epoxy-(5Z,8Z,11Z,14Z)-eicosatetraenoate + oxidized [NADPH--hemoprotein reductase] + H2O + H(+). The catalysed reaction is (4Z,7Z,10Z,13Z,16Z,19Z)-docosahexaenoate + reduced [NADPH--hemoprotein reductase] + O2 = (19S,20R)-epoxy-(4Z,7Z,10Z,13Z,16Z)-docosapentaenoate + oxidized [NADPH--hemoprotein reductase] + H2O + H(+). It catalyses the reaction (4Z,7Z,10Z,13Z,16Z,19Z)-docosahexaenoate + reduced [NADPH--hemoprotein reductase] + O2 = (19R,20S)-epoxy-(4Z,7Z,10Z,13Z,16Z)-docosapentaenoate + oxidized [NADPH--hemoprotein reductase] + H2O + H(+). The enzyme catalyses all-trans-retinol + reduced [NADPH--hemoprotein reductase] + O2 = all-trans-retinal + oxidized [NADPH--hemoprotein reductase] + 2 H2O + H(+). It carries out the reaction all-trans-retinal + reduced [NADPH--hemoprotein reductase] + O2 = all-trans-retinoate + oxidized [NADPH--hemoprotein reductase] + H2O + 2 H(+). The catalysed reaction is (13S)-hydroperoxy-(9Z,11E)-octadecadienoate = 13-oxo-(9Z,11E)-octadecadienoate + H2O. It catalyses the reaction (12S)-hydroperoxy-(5Z,8Z,10E,14Z)-eicosatetraenoate = 12-oxo-(5Z,8Z,10E,14Z)-eicosatetraenoate + H2O. The enzyme catalyses (15S)-hydroperoxy-(5Z,8Z,11Z,13E)-eicosatetraenoate = 15-oxo-(5Z,8Z,11Z,13E)-eicosatetraenoate + H2O. It carries out the reaction (5S)-hydroperoxy-(6E,8Z,11Z,14Z)-eicosatetraenoate = 5-oxo-(6E,8Z,11Z,14Z)-eicosatetraenoate + H2O. The protein operates within steroid hormone biosynthesis. Its pathway is lipid metabolism; fatty acid metabolism. It functions in the pathway cofactor metabolism; retinol metabolism. Its function is as follows. A cytochrome P450 monooxygenase involved in the metabolism of various endogenous substrates, including fatty acids, steroid hormones and vitamins. Mechanistically, uses molecular oxygen inserting one oxygen atom into a substrate, and reducing the second into a water molecule, with two electrons provided by NADPH via cytochrome P450 reductase (CPR; NADPH-ferrihemoprotein reductase). Catalyzes the hydroxylation of carbon-hydrogen bonds. Exhibits high catalytic activity for the formation of hydroxyestrogens from estrone (E1) and 17beta-estradiol (E2), namely 2-hydroxy E1 and E2, as well as D-ring hydroxylated E1 and E2 at the C15alpha and C16alpha positions. Displays different regioselectivities for polyunsaturated fatty acids (PUFA) hydroxylation. Catalyzes the epoxidation of double bonds of certain PUFA. Converts arachidonic acid toward epoxyeicosatrienoic acid (EET) regioisomers, 8,9-, 11,12-, and 14,15-EET, that function as lipid mediators in the vascular system. Displays an absolute stereoselectivity in the epoxidation of eicosapentaenoic acid (EPA) producing the 17(R),18(S) enantiomer. May play an important role in all-trans retinoic acid biosynthesis in extrahepatic tissues. Catalyzes two successive oxidative transformation of all-trans retinol to all-trans retinal and then to the active form all-trans retinoic acid. May also participate in eicosanoids metabolism by converting hydroperoxide species into oxo metabolites (lipoxygenase-like reaction, NADPH-independent). The polypeptide is Cytochrome P450 1A1 (Rattus norvegicus (Rat)).